The following is a 393-amino-acid chain: Protein TsgA homolog (393 aa).

The next 12 membrane-spanning stretches (helical) occupy residues 11–31 (WISF…GMVM), 51–71 (FLNA…EIIP), 78–98 (FGFV…SLAL), 101–121 (AAMF…TFLI), 134–154 (LLFT…VAAY), 162–182 (WYWV…LTFG), 206–226 (IGVL…LGFI), 245–265 (TLVS…SFIL), 273–293 (ILTV…KAQP), 297–317 (AWFI…IITL), 332–352 (FVLT…GPIV), and 361–381 (LLTA…LGFV).

The protein belongs to the major facilitator superfamily. TsgA family.

Its subcellular location is the cell inner membrane. The polypeptide is Protein TsgA homolog (Citrobacter koseri (strain ATCC BAA-895 / CDC 4225-83 / SGSC4696)).